Here is a 214-residue protein sequence, read N- to C-terminus: Adenylate kinase (214 aa).

10-15 (GAGKGT) lines the ATP pocket. Positions 30-59 (STGDMFRDHKARGTEIGKQVQAIMDAGGLV) are NMP. Residues Thr31, Arg36, 57-59 (GLV), 85-88 (GYPR), and Gln92 each bind AMP. The LID stretch occupies residues 126 to 163 (GRRSCPRCGAVYHVSQNPPHRAGFCDRDDAALVQREDD). Arg127 is an ATP binding site. The Zn(2+) site is built by Cys130 and Cys133. 136-137 (VY) is a binding site for ATP. Residues Cys150 and Asp153 each coordinate Zn(2+). Arg160 and Arg171 together coordinate AMP. Residue Gly199 coordinates ATP.

This sequence belongs to the adenylate kinase family. In terms of assembly, monomer.

It is found in the cytoplasm. It carries out the reaction AMP + ATP = 2 ADP. Its pathway is purine metabolism; AMP biosynthesis via salvage pathway; AMP from ADP: step 1/1. Catalyzes the reversible transfer of the terminal phosphate group between ATP and AMP. Plays an important role in cellular energy homeostasis and in adenine nucleotide metabolism. This chain is Adenylate kinase, found in Anaeromyxobacter dehalogenans (strain 2CP-1 / ATCC BAA-258).